A 90-amino-acid polypeptide reads, in one-letter code: Probable Fe(2+)-trafficking protein (90 aa).

It belongs to the Fe(2+)-trafficking protein family.

In terms of biological role, could be a mediator in iron transactions between iron acquisition and iron-requiring processes, such as synthesis and/or repair of Fe-S clusters in biosynthetic enzymes. This chain is Probable Fe(2+)-trafficking protein, found in Aliivibrio fischeri (strain ATCC 700601 / ES114) (Vibrio fischeri).